Reading from the N-terminus, the 179-residue chain is Large ribosomal subunit protein uL6c (179 aa).

Belongs to the universal ribosomal protein uL6 family. In terms of assembly, part of the 50S ribosomal subunit.

It localises to the plastid. It is found in the chloroplast. Its function is as follows. Binds 23S rRNA. The sequence is that of Large ribosomal subunit protein uL6c (rpl6) from Guillardia theta (Cryptophyte).